The following is a 196-amino-acid chain: ATP-dependent Clp protease proteolytic subunit (196 aa).

Residue S98 is the Nucleophile of the active site. The active site involves H123.

Belongs to the peptidase S14 family. Fourteen ClpP subunits assemble into 2 heptameric rings which stack back to back to give a disk-like structure with a central cavity, resembling the structure of eukaryotic proteasomes.

The protein localises to the cytoplasm. It carries out the reaction Hydrolysis of proteins to small peptides in the presence of ATP and magnesium. alpha-casein is the usual test substrate. In the absence of ATP, only oligopeptides shorter than five residues are hydrolyzed (such as succinyl-Leu-Tyr-|-NHMec, and Leu-Tyr-Leu-|-Tyr-Trp, in which cleavage of the -Tyr-|-Leu- and -Tyr-|-Trp bonds also occurs).. Functionally, cleaves peptides in various proteins in a process that requires ATP hydrolysis. Has a chymotrypsin-like activity. Plays a major role in the degradation of misfolded proteins. The chain is ATP-dependent Clp protease proteolytic subunit from Actinobacillus pleuropneumoniae serotype 5b (strain L20).